The chain runs to 394 residues: Arogenate dehydratase 2 (394 aa).

Residues 1–24 (MAATTTLRSPKIPHPPPESTPSNL) form a disordered region. The transit peptide at 1 to 47 (MAATTTLRSPKIPHPPPESTPSNLSYLSQISLTPVPKRRRFISIYAC) directs the protein to the chloroplast. Positions 108–283 (RVAYQGVRGA…NVTRFLMLAR (176 aa)) constitute a Prephenate dehydratase domain. Positions 297–388 (SVVFSLDEGP…TFLRVLGSYP (92 aa)) constitute an ACT domain.

As to expression, expressed at low levels in petals (corollas and tubes), stems, leaves, pistils, stamens, ovaries and sepals.

It is found in the plastid. Its subcellular location is the chloroplast stroma. The enzyme catalyses prephenate + H(+) = 3-phenylpyruvate + CO2 + H2O. It catalyses the reaction L-arogenate + H(+) = L-phenylalanine + CO2 + H2O. The protein operates within amino-acid biosynthesis; L-phenylalanine biosynthesis; L-phenylalanine from L-arogenate: step 1/1. Converts the prephenate and L-arogenate produced from the shikimate-chorismate pathway into 3-phenylpyruvate and phenylalanine (Phe), respectively. Involved in floral volatile benzenoids and phenylpropanoids (FVBP) production. The protein is Arogenate dehydratase 2 of Petunia hybrida (Petunia).